The sequence spans 118 residues: Small ribosomal subunit protein uS13 (118 aa).

The disordered stretch occupies residues 93–118 (RSLPVRGQRSKTNARTRKGPRKPIKK).

The protein belongs to the universal ribosomal protein uS13 family. As to quaternary structure, part of the 30S ribosomal subunit. Forms a loose heterodimer with protein S19. Forms two bridges to the 50S subunit in the 70S ribosome.

In terms of biological role, located at the top of the head of the 30S subunit, it contacts several helices of the 16S rRNA. In the 70S ribosome it contacts the 23S rRNA (bridge B1a) and protein L5 of the 50S subunit (bridge B1b), connecting the 2 subunits; these bridges are implicated in subunit movement. Contacts the tRNAs in the A and P-sites. This is Small ribosomal subunit protein uS13 from Teredinibacter turnerae (strain ATCC 39867 / T7901).